Consider the following 161-residue polypeptide: Large ribosomal subunit protein uL15 (161 aa).

The segment at 1 to 39 (MTKLNELAPREGSTKGRMRVGRGPGSGKGKTAGRGVKGQ) is disordered. Residues 22 to 36 (RGPGSGKGKTAGRGV) show a composition bias toward gly residues.

It belongs to the universal ribosomal protein uL15 family. In terms of assembly, part of the 50S ribosomal subunit.

Functionally, binds to the 23S rRNA. The sequence is that of Large ribosomal subunit protein uL15 from Caulobacter vibrioides (strain ATCC 19089 / CIP 103742 / CB 15) (Caulobacter crescentus).